Here is a 432-residue protein sequence, read N- to C-terminus: Adenylosuccinate synthetase (432 aa).

GTP is bound by residues 12-18 (GDEGKGK) and 40-42 (GHT). The Proton acceptor role is filled by D13. Residues D13 and G40 each contribute to the Mg(2+) site. IMP is bound by residues 13–16 (DEGK), 38–41 (NAGH), T130, R144, Q225, T240, and R304. The active-site Proton donor is H41. Position 300-306 (300-306 (STTGRPR)) interacts with substrate. Residues R306, 332-334 (KLD), and 414-416 (SVG) contribute to the GTP site.

It belongs to the adenylosuccinate synthetase family. In terms of assembly, homodimer. Mg(2+) is required as a cofactor.

The protein resides in the cytoplasm. The enzyme catalyses IMP + L-aspartate + GTP = N(6)-(1,2-dicarboxyethyl)-AMP + GDP + phosphate + 2 H(+). The protein operates within purine metabolism; AMP biosynthesis via de novo pathway; AMP from IMP: step 1/2. Its function is as follows. Plays an important role in the de novo pathway of purine nucleotide biosynthesis. Catalyzes the first committed step in the biosynthesis of AMP from IMP. The polypeptide is Adenylosuccinate synthetase (Geobacter sp. (strain M21)).